A 220-amino-acid polypeptide reads, in one-letter code: Charged multivesicular body protein 5 (220 aa).

Residues 1–10 (MNRIFGRGKP) show a composition bias toward basic residues. A disordered region spans residues 1-27 (MNRIFGRGKPKGPPPNLTDCISGVDSR). Coiled-coil stretches lie at residues 25-55 (DSRAESVDKKIARLDAELMKYKDQMKKMRDG) and 121-153 (KNVKIDQIEDLQDQLEDMMEDANEVQEALSRSY). The interval 178-206 (DDNSYLDEASSAPAIPEGAPGDRTTNRDG) is disordered.

This sequence belongs to the SNF7 family. As to quaternary structure, probable peripherally associated component of the endosomal sorting required for transport complex III (ESCRT-III).

Its subcellular location is the cytoplasm. It localises to the cytosol. The protein localises to the endosome membrane. Functionally, probable peripherally associated component of the endosomal sorting required for transport complex III (ESCRT-III) which is involved in multivesicular bodies (MVBs) formation and sorting of endosomal cargo proteins into MVBs. MVBs contain intraluminal vesicles (ILVs) that are generated by invagination and scission from the limiting membrane of the endosome and mostly are delivered to lysosomes enabling degradation of membrane proteins, such as stimulated growth factor receptors, lysosomal enzymes and lipids. This Danio rerio (Zebrafish) protein is Charged multivesicular body protein 5 (chmp5).